Reading from the N-terminus, the 204-residue chain is Vacuolar protein-sorting-associated protein 46 (204 aa).

The segment at 1-103 (MSRNSAAGLE…ASMGQVCKGM (103 aa)) is interaction with VSP24. Serine 5 carries the post-translational modification Phosphoserine. Coiled-coil stretches lie at residues 9–56 (LENT…RIYA) and 109–129 (NMNLQQITMIMDKFEQQFEDL). The tract at residues 104–204 (DKALQNMNLQ…LAQRLRALRG (101 aa)) is interaction with VSP4. The interaction with VTA1 stretch occupies residues 176-204 (NVPEIKAKEVNVDDEKEDKLAQRLRALRG). Residues 185–196 (VNVDDEKEDKLA) show a composition bias toward basic and acidic residues. The segment at 185–204 (VNVDDEKEDKLAQRLRALRG) is disordered.

Belongs to the SNF7 family. Self-associates. Interacts with VPS4 and VTA1. Interacts with IST1.

It is found in the endosome membrane. It localises to the endomembrane system. In terms of biological role, class E VPS protein implicated in concentration and sorting of cargo proteins of the multivesicular body (MVB) for incorporation into intralumenal vesicles. The lumenal sequestrated membrane proteins will be targeted into the vacuole after fusion of the endosome with the vacuole. Probably acts as a peripherally associated component of the ESCRT-III complex, which appears to be critical for late steps in MVB sorting, such as membrane invagination and final cargo sorting and recruits late-acting components of the sorting machinery. The MVB pathway requires the sequential function of ESCRT-O, -I,-II and -III complex assemblies. Regulates the membrane association of VPS4. Can stimulate VPS4 ATPase activity directly or via VTA1. The chain is Vacuolar protein-sorting-associated protein 46 (DID2) from Saccharomyces cerevisiae (strain ATCC 204508 / S288c) (Baker's yeast).